A 79-amino-acid polypeptide reads, in one-letter code: Acyl carrier protein (79 aa).

The region spanning 2–77 is the Carrier domain; the sequence is SDIEARVRKI…HAIDYIKSNA (76 aa). S37 bears the O-(pantetheine 4'-phosphoryl)serine mark.

This sequence belongs to the acyl carrier protein (ACP) family. In terms of processing, 4'-phosphopantetheine is transferred from CoA to a specific serine of apo-ACP by AcpS. This modification is essential for activity because fatty acids are bound in thioester linkage to the sulfhydryl of the prosthetic group.

The protein localises to the cytoplasm. It functions in the pathway lipid metabolism; fatty acid biosynthesis. Its function is as follows. Carrier of the growing fatty acid chain in fatty acid biosynthesis. The chain is Acyl carrier protein from Xylella fastidiosa (strain M23).